Reading from the N-terminus, the 169-residue chain is Cytochrome c oxidase subunit 4 isoform 1, mitochondrial (169 aa).

Residues 1 to 22 (MLASRALSLIGKRAISTSVCLR) constitute a mitochondrion transit peptide. The Mitochondrial matrix portion of the chain corresponds to 23 to 99 (AHGSVVKSED…FAEMNRGTNE (77 aa)). At Lys29 the chain carries N6-acetyllysine; alternate. Lys29 bears the N6-succinyllysine; alternate mark. Phosphoserine occurs at positions 56 and 58. At Lys60 the chain carries N6-acetyllysine; alternate. The residue at position 60 (Lys60) is an N6-succinyllysine; alternate. The residue at position 67 (Lys67) is an N6-acetyllysine. The chain crosses the membrane as a helical span at residues 100-125 (WKTVVGMAMFFIGFTALVLIWEKSYV). Over 126–169 (YGPIPHTFDRDWVAMQTKRMLDMKANPIQGFSAKWDYDKNEWKK) the chain is Mitochondrial intermembrane.

The protein belongs to the cytochrome c oxidase IV family. In terms of assembly, component of the cytochrome c oxidase (complex IV, CIV), a multisubunit enzyme composed of 14 subunits. The complex is composed of a catalytic core of 3 subunits MT-CO1, MT-CO2 and MT-CO3, encoded in the mitochondrial DNA, and 11 supernumerary subunits COX4I, COX5A, COX5B, COX6A, COX6B, COX6C, COX7A, COX7B, COX7C, COX8 and NDUFA4, which are encoded in the nuclear genome. The complex exists as a monomer or a dimer and forms supercomplexes (SCs) in the inner mitochondrial membrane with NADH-ubiquinone oxidoreductase (complex I, CI) and ubiquinol-cytochrome c oxidoreductase (cytochrome b-c1 complex, complex III, CIII), resulting in different assemblies (supercomplex SCI(1)III(2)IV(1) and megacomplex MCI(2)III(2)IV(2)). Interacts with PHB2; the interaction decreases in absence of SPHK2. Interacts with AFG1L. Interacts with ABCB7; this interaction allows the regulation of cellular iron homeostasis and cellular reactive oxygen species (ROS) levels in cardiomyocytes. Interacts with FLVCR2; this interaction occurs in the absence of heme and is disrupted upon heme binding. Interacts with IRGC.

Its subcellular location is the mitochondrion inner membrane. It functions in the pathway energy metabolism; oxidative phosphorylation. Component of the cytochrome c oxidase, the last enzyme in the mitochondrial electron transport chain which drives oxidative phosphorylation. The respiratory chain contains 3 multisubunit complexes succinate dehydrogenase (complex II, CII), ubiquinol-cytochrome c oxidoreductase (cytochrome b-c1 complex, complex III, CIII) and cytochrome c oxidase (complex IV, CIV), that cooperate to transfer electrons derived from NADH and succinate to molecular oxygen, creating an electrochemical gradient over the inner membrane that drives transmembrane transport and the ATP synthase. Cytochrome c oxidase is the component of the respiratory chain that catalyzes the reduction of oxygen to water. Electrons originating from reduced cytochrome c in the intermembrane space (IMS) are transferred via the dinuclear copper A center (CU(A)) of subunit 2 and heme A of subunit 1 to the active site in subunit 1, a binuclear center (BNC) formed by heme A3 and copper B (CU(B)). The BNC reduces molecular oxygen to 2 water molecules using 4 electrons from cytochrome c in the IMS and 4 protons from the mitochondrial matrix. The polypeptide is Cytochrome c oxidase subunit 4 isoform 1, mitochondrial (Cox4i1) (Mus musculus (Mouse)).